Here is a 192-residue protein sequence, read N- to C-terminus: Acetyltransferase PA3944 (192 aa).

The region spanning 18-187 is the N-acetyltransferase domain; it reads LLLRAWRDSD…RHILYRVDAA (170 aa). CoA-binding positions include 105–107, Gly-113, Asn-145, and 150–152; these read WRL and GLM.

Functionally, catalyzes the transfer of an acetyl group from acetyl coenzyme A (AcCoA) to an acceptor substrate and releases both CoA and the acetylated product. It prefers the peptide Asp-Phe methyl ester (or aspartame) and the peptide antibiotics polymyxin B and colistin. Other substrates like dopamine, serotonin, puromycin, chloramphenicol, D-glucosamine, glycine and N-alpha-acetyl-L-glutamine are used and displayed lower activity. The polypeptide is Acetyltransferase PA3944 (Pseudomonas aeruginosa (strain ATCC 15692 / DSM 22644 / CIP 104116 / JCM 14847 / LMG 12228 / 1C / PRS 101 / PAO1)).